The chain runs to 599 residues: Laccase-15 (599 aa).

Positions 1-29 are cleaved as a signal peptide; that stretch reads MKRCQSSRPTAAVAAVVAAVSMIIVLVSG. Plastocyanin-like domains are found at residues 46-162 and 173-328; these read VVSQ…PRHG and REVP…YSSN. N-linked (GlcNAc...) asparagine glycosylation is found at Asn-51 and Asn-92. Residues His-96 and His-98 each contribute to the Cu cation site. An N-linked (GlcNAc...) asparagine glycan is attached at Asn-124. Cu cation-binding residues include His-141 and His-143. Residues Asn-193, Asn-217, Asn-331, Asn-355, Asn-412, and Asn-454 are each glycosylated (N-linked (GlcNAc...) asparagine). In terms of domain architecture, Plastocyanin-like 3 spans 444-586; sequence ELAERPPRAY…AAVFIVEDGP (143 aa). 8 residues coordinate Cu cation: Asn-503, His-506, His-508, His-565, Cys-566, His-567, His-571, and Met-576.

This sequence belongs to the multicopper oxidase family. Cu cation is required as a cofactor.

The protein localises to the secreted. Its subcellular location is the extracellular space. The protein resides in the apoplast. It carries out the reaction 4 hydroquinone + O2 = 4 benzosemiquinone + 2 H2O. In terms of biological role, lignin degradation and detoxification of lignin-derived products. The chain is Laccase-15 (LAC15) from Oryza sativa subsp. japonica (Rice).